A 444-amino-acid chain; its full sequence is Na(+)-translocating NADH-quinone reductase subunit A (444 aa).

This sequence belongs to the NqrA family. Composed of six subunits; NqrA, NqrB, NqrC, NqrD, NqrE and NqrF.

It carries out the reaction a ubiquinone + n Na(+)(in) + NADH + H(+) = a ubiquinol + n Na(+)(out) + NAD(+). NQR complex catalyzes the reduction of ubiquinone-1 to ubiquinol by two successive reactions, coupled with the transport of Na(+) ions from the cytoplasm to the periplasm. NqrA to NqrE are probably involved in the second step, the conversion of ubisemiquinone to ubiquinol. The sequence is that of Na(+)-translocating NADH-quinone reductase subunit A from Shewanella amazonensis (strain ATCC BAA-1098 / SB2B).